The sequence spans 126 residues: UPF0344 protein ABC2900 (126 aa).

4 consecutive transmembrane segments (helical) span residues 16-36 (ASHE…YFLF), 43-63 (AGTI…VTGA), 66-86 (LIAY…VLLI), and 104-124 (GMLF…YGII).

This sequence belongs to the UPF0344 family.

It localises to the cell membrane. The chain is UPF0344 protein ABC2900 from Shouchella clausii (strain KSM-K16) (Alkalihalobacillus clausii).